Reading from the N-terminus, the 211-residue chain is Peptide methionine sulfoxide reductase MsrA (211 aa).

Cys60 is a catalytic residue.

It belongs to the MsrA Met sulfoxide reductase family.

It carries out the reaction L-methionyl-[protein] + [thioredoxin]-disulfide + H2O = L-methionyl-(S)-S-oxide-[protein] + [thioredoxin]-dithiol. It catalyses the reaction [thioredoxin]-disulfide + L-methionine + H2O = L-methionine (S)-S-oxide + [thioredoxin]-dithiol. Its function is as follows. Has an important function as a repair enzyme for proteins that have been inactivated by oxidation. Catalyzes the reversible oxidation-reduction of methionine sulfoxide in proteins to methionine. This chain is Peptide methionine sulfoxide reductase MsrA, found in Methanosarcina mazei (strain ATCC BAA-159 / DSM 3647 / Goe1 / Go1 / JCM 11833 / OCM 88) (Methanosarcina frisia).